The sequence spans 379 residues: Putative glutamate--cysteine ligase 2 (379 aa).

This sequence belongs to the glutamate--cysteine ligase type 2 family. YbdK subfamily.

The enzyme catalyses L-cysteine + L-glutamate + ATP = gamma-L-glutamyl-L-cysteine + ADP + phosphate + H(+). Functionally, ATP-dependent carboxylate-amine ligase which exhibits weak glutamate--cysteine ligase activity. This is Putative glutamate--cysteine ligase 2 from Mycobacterium avium (strain 104).